Reading from the N-terminus, the 342-residue chain is Holliday junction branch migration complex subunit RuvB (342 aa).

The segment at 1–181 is large ATPase domain (RuvB-L); it reads MENRMVTPFD…FGMLCAMEFY (181 aa). ATP is bound by residues leucine 20, arginine 21, glycine 62, lysine 65, threonine 66, threonine 67, 128–130, arginine 171, tyrosine 181, and arginine 218; that span reads EDY. Threonine 66 lines the Mg(2+) pocket. A small ATPAse domain (RuvB-S) region spans residues 182–252; the sequence is TDEELMEIVV…GAKAALDLLE (71 aa). The tract at residues 255–342 is head domain (RuvB-H); it reads KEGLDKIDNK…KDNQVSIFNK (88 aa). The DNA site is built by arginine 310 and arginine 315.

The protein belongs to the RuvB family. Homohexamer. Forms an RuvA(8)-RuvB(12)-Holliday junction (HJ) complex. HJ DNA is sandwiched between 2 RuvA tetramers; dsDNA enters through RuvA and exits via RuvB. An RuvB hexamer assembles on each DNA strand where it exits the tetramer. Each RuvB hexamer is contacted by two RuvA subunits (via domain III) on 2 adjacent RuvB subunits; this complex drives branch migration. In the full resolvosome a probable DNA-RuvA(4)-RuvB(12)-RuvC(2) complex forms which resolves the HJ.

It localises to the cytoplasm. The enzyme catalyses ATP + H2O = ADP + phosphate + H(+). In terms of biological role, the RuvA-RuvB-RuvC complex processes Holliday junction (HJ) DNA during genetic recombination and DNA repair, while the RuvA-RuvB complex plays an important role in the rescue of blocked DNA replication forks via replication fork reversal (RFR). RuvA specifically binds to HJ cruciform DNA, conferring on it an open structure. The RuvB hexamer acts as an ATP-dependent pump, pulling dsDNA into and through the RuvAB complex. RuvB forms 2 homohexamers on either side of HJ DNA bound by 1 or 2 RuvA tetramers; 4 subunits per hexamer contact DNA at a time. Coordinated motions by a converter formed by DNA-disengaged RuvB subunits stimulates ATP hydrolysis and nucleotide exchange. Immobilization of the converter enables RuvB to convert the ATP-contained energy into a lever motion, pulling 2 nucleotides of DNA out of the RuvA tetramer per ATP hydrolyzed, thus driving DNA branch migration. The RuvB motors rotate together with the DNA substrate, which together with the progressing nucleotide cycle form the mechanistic basis for DNA recombination by continuous HJ branch migration. Branch migration allows RuvC to scan DNA until it finds its consensus sequence, where it cleaves and resolves cruciform DNA. In Clostridium botulinum (strain Loch Maree / Type A3), this protein is Holliday junction branch migration complex subunit RuvB.